The sequence spans 120 residues: Large ribosomal subunit protein eL34 (120 aa).

Belongs to the eukaryotic ribosomal protein eL34 family.

The sequence is that of Large ribosomal subunit protein eL34 (RPL34) from Pisum sativum (Garden pea).